Here is a 108-residue protein sequence, read N- to C-terminus: Iron-sulfur cluster assembly protein CyaY (108 aa).

Belongs to the frataxin family.

Functionally, involved in iron-sulfur (Fe-S) cluster assembly. May act as a regulator of Fe-S biogenesis. The protein is Iron-sulfur cluster assembly protein CyaY of Pseudoalteromonas atlantica (strain T6c / ATCC BAA-1087).